The chain runs to 692 residues: Elongation factor G (692 aa).

In terms of domain architecture, tr-type G spans 9–283 (DKLRNIGIMA…AVIDYLPSPL (275 aa)). GTP is bound by residues 18 to 25 (AHIDAGKT), 82 to 86 (DTPGH), and 136 to 139 (NKMD).

Belongs to the TRAFAC class translation factor GTPase superfamily. Classic translation factor GTPase family. EF-G/EF-2 subfamily.

Its subcellular location is the cytoplasm. Catalyzes the GTP-dependent ribosomal translocation step during translation elongation. During this step, the ribosome changes from the pre-translocational (PRE) to the post-translocational (POST) state as the newly formed A-site-bound peptidyl-tRNA and P-site-bound deacylated tRNA move to the P and E sites, respectively. Catalyzes the coordinated movement of the two tRNA molecules, the mRNA and conformational changes in the ribosome. The polypeptide is Elongation factor G (fusA) (Thermotoga maritima (strain ATCC 43589 / DSM 3109 / JCM 10099 / NBRC 100826 / MSB8)).